We begin with the raw amino-acid sequence, 334 residues long: Dual specificity mitogen-activated protein kinase kinase 6 (334 aa).

A compositionally biased stretch (basic residues) spans 1–11 (MSQSKGKKRNP). The segment at 1-34 (MSQSKGKKRNPGLKIPKEAFEQPQTSSTPPRDLD) is disordered. Positions 4-19 (SKGKKRNPGLKIPKEA) are d domain. The Protein kinase domain occupies 53–314 (LEPIVELGRG…YPELMQHPFF (262 aa)). Residues 59-67 (LGRGAYGVV) and Lys-82 each bind ATP. Asp-179 serves as the catalytic Proton acceptor. Ser-207 carries the post-translational modification Phosphoserine; by MAPK3. Thr-211 is subject to Phosphothreonine; by MAPK3. The tract at residues 311 to 334 (HPFFTVHESKAADVASFVKLILGD) is DVD domain.

Belongs to the protein kinase superfamily. STE Ser/Thr protein kinase family. MAP kinase kinase subfamily. As to quaternary structure, dimer. Interacts (via its D domain) with its substrates MAPK11, MAPK12, MAPK13 and MAPK14. Interacts (via its DVD domain) with MAP3Ks activators like MAP3K5/ASK1, MAP3K1/MEKK1, MAP3K2/MEKK2, MAP3K3/MEKK3, MAP3K4/MEKK4, MAP3K7/TAK1, MAP3K11/MLK3 and MAP3K17/TAOK2. Interacts with DCTN1. Interacts with EIF2AK2/PKR. In terms of processing, weakly autophosphorylated. Phosphorylated at Ser-207 and Thr-211 by the majority of M3Ks, such as MAP3K5/ASK1, MAP3K1/MEKK1, MAP3K2/MEKK2, MAP3K3/MEKK3, MAP3K4/MEKK4, MAP3K7/TAK1, MAP3K11/MLK3 and MAP3K17/TAOK2. In response to genotoxic stress, MAP3K-phosphorylated MAP2K6 is ubiquitinated and degraded by the SCF(FBXO31) complex.

The protein resides in the nucleus. It localises to the cytoplasm. It is found in the cytoskeleton. The enzyme catalyses L-seryl-[protein] + ATP = O-phospho-L-seryl-[protein] + ADP + H(+). It carries out the reaction L-threonyl-[protein] + ATP = O-phospho-L-threonyl-[protein] + ADP + H(+). It catalyses the reaction L-tyrosyl-[protein] + ATP = O-phospho-L-tyrosyl-[protein] + ADP + H(+). Its activity is regulated as follows. Activated by dual phosphorylation on Ser-207 and Thr-211 in response to a variety of cellular stresses, including UV radiation, osmotic shock, hypoxia, inflammatory cytokines, interferon gamma (IFNG), and less often by growth factors. MAP2K6/MKK6 is activated by the majority of M3Ks, such as MAP3K5/ASK1, MAP3K1/MEKK1, MAP3K2/MEKK2, MAP3K3/MEKK3, MAP3K4/MEKK4, MAP3K7/TAK1, MAP3K11/MLK3 and MAP3K17/TAOK2. In terms of biological role, dual specificity protein kinase which acts as an essential component of the MAP kinase signal transduction pathway. With MAP3K3/MKK3, catalyzes the concomitant phosphorylation of a threonine and a tyrosine residue in the MAP kinases p38 MAPK11, MAPK12, MAPK13 and MAPK14 and plays an important role in the regulation of cellular responses to cytokines and all kinds of stresses. Especially, MAP2K3/MKK3 and MAP2K6/MKK6 are both essential for the activation of MAPK11 and MAPK13 induced by environmental stress, whereas MAP2K6/MKK6 is the major MAPK11 activator in response to TNF. MAP2K6/MKK6 also phosphorylates and activates PAK6. The p38 MAP kinase signal transduction pathway leads to direct activation of transcription factors. Nuclear targets of p38 MAP kinase include the transcription factors ATF2 and ELK1. Within the p38 MAPK signal transduction pathway, MAP3K6/MKK6 mediates phosphorylation of STAT4 through MAPK14 activation, and is therefore required for STAT4 activation and STAT4-regulated gene expression in response to IL-12 stimulation. The pathway is also crucial for IL-6-induced SOCS3 expression and down-regulation of IL-6-mediated gene induction; and for IFNG-dependent gene transcription. Has a role in osteoclast differentiation through NF-kappa-B transactivation by TNFSF11, and in endochondral ossification and since SOX9 is another likely downstream target of the p38 MAPK pathway. MAP2K6/MKK6 mediates apoptotic cell death in thymocytes. Acts also as a regulator for melanocytes dendricity, through the modulation of Rho family GTPases. This Mus musculus (Mouse) protein is Dual specificity mitogen-activated protein kinase kinase 6 (Map2k6).